Consider the following 210-residue polypeptide: RNA chaperone ProQ (210 aa).

2 stretches are compositionally biased toward basic and acidic residues: residues 103–124 and 132–144; these read LKES…EKAK and RKAD…DKPK. Residues 103–148 are disordered; sequence LKESKERVFASRRTNNKEEKAKQPRRPAPRKADAAAKSDKPKAAPK.

This sequence belongs to the ProQ family.

It is found in the cytoplasm. Functionally, RNA chaperone with significant RNA binding, RNA strand exchange and RNA duplexing activities. The sequence is that of RNA chaperone ProQ from Aeromonas salmonicida (strain A449).